Reading from the N-terminus, the 620-residue chain is Probable potassium transport system protein Kup 1 (620 aa).

The next 12 helical transmembrane spans lie at 10–30 (LLIS…LYAL), 50–70 (VLSL…VIVI), 102–122 (MLLG…TPAI), 138–158 (LTPY…MIQK), 168–188 (FGPV…VNIV), 211–231 (MMSF…EALY), 246–266 (WFAL…ALLL), 284–304 (MVVP…QAVI), 336–356 (IYIP…VIGF), 368–388 (IAVT…MALM), 393–413 (WIAV…FFFA), and 415–435 (IIKV…SFTV).

This sequence belongs to the HAK/KUP transporter (TC 2.A.72) family.

It is found in the cell inner membrane. The catalysed reaction is K(+)(in) + H(+)(in) = K(+)(out) + H(+)(out). In terms of biological role, transport of potassium into the cell. Likely operates as a K(+):H(+) symporter. In Rhodopseudomonas palustris (strain BisB18), this protein is Probable potassium transport system protein Kup 1.